We begin with the raw amino-acid sequence, 556 residues long: MNVMQENQIKLIAHIKQAVVQAVGLEEAEVPEILLEVPKDKKHGDYSTNIAMQLARVAKKAPRQIAESIVPELKKDNKLIKEVEIAGPGFINFYLDNAYLTDLVPVILTEDKQYGESDFGKGEKFQIEFVSANPTGDLHLGHARGAAIGDSLANIMKMAGFDVSREYYINDAGNQINNLVLSAEARYFEALGLDSEFPEDGYRGADIISLGKDLAAKYGDKYVHTSEEERRSVFRVDALAFETGKLRADLEEFRVSFDEWFSETSLYEENKVLPALERLRENGYIYEQDGATWLRTTDFEDDKDRVLIKSDGSYTYFLPDIAYHLNKLERGFDVLIDIWGADHHGYIPRMRAAIEALGYSPNQLEVEIIQLVHLFEDGVQVKMSKRTGKSVTMRDLIEEVGLDATRYFFAMRSSDTHMNFDMSLAKSTSNDNPVYYVQYAHARISSILRSGKEQGLEVTKDADMSLLQTEAEYDLLKVLGEFADVVAEAATKRAPHRIVRYLNDLASAFHRFYNSNKVLDMDNLEVTKARLALIKTAQITLRNGLTLLGVSAPEKM.

The 'HIGH' region signature appears at 132-142 (ANPTGDLHLGH).

This sequence belongs to the class-I aminoacyl-tRNA synthetase family. As to quaternary structure, monomer.

The protein resides in the cytoplasm. The catalysed reaction is tRNA(Arg) + L-arginine + ATP = L-arginyl-tRNA(Arg) + AMP + diphosphate. In Listeria monocytogenes serotype 4a (strain HCC23), this protein is Arginine--tRNA ligase.